The following is a 143-amino-acid chain: MAAPRRGRGSSTVLSSVPLQMLFYLSGTYYALYFLATLLMITYKSQVFSYPHRYLVLDLALLFLMGILEAVRLYLGTRGNLTEAERPLAASLALTAGTALLSAHFLLWQALVLWADWALSATLLALHGLEAVLQVVAIAAFTR.

4 consecutive transmembrane segments (helical) span residues 21–41 (MLFYLSGTYYALYFLATLLMI), 55–75 (LVLDLALLFLMGILEAVRLYL), 99–119 (ALLSAHFLLWQALVLWADWAL), and 121–141 (ATLLALHGLEAVLQVVAIAAF).

The protein resides in the membrane. It localises to the cell projection. The protein localises to the cilium. The polypeptide is Transmembrane protein 80 (Homo sapiens (Human)).